The chain runs to 206 residues: tRNA (guanine-N(7)-)-methyltransferase (206 aa).

4 residues coordinate S-adenosyl-L-methionine: Glu37, Glu62, Asp89, and Asp112. Asp112 is a catalytic residue. Residues Lys116 and Asp148 each coordinate substrate.

Belongs to the class I-like SAM-binding methyltransferase superfamily. TrmB family.

It carries out the reaction guanosine(46) in tRNA + S-adenosyl-L-methionine = N(7)-methylguanosine(46) in tRNA + S-adenosyl-L-homocysteine. Its pathway is tRNA modification; N(7)-methylguanine-tRNA biosynthesis. In terms of biological role, catalyzes the formation of N(7)-methylguanine at position 46 (m7G46) in tRNA. This chain is tRNA (guanine-N(7)-)-methyltransferase, found in Myxococcus xanthus (strain DK1622).